The chain runs to 501 residues: MKKRALISVFDKDGVLELAKFLRDRDVEIISSGGTYKYLKENNIEVKEISEITDFPEMLDGRVKTLHPLVHAGILAIRDNKEHMKTLEEREINTIDYVVVNLYPFFEKVREDLSFEEKVEFIDIGGPTMLRAAAKNFKDVVVLSDKKDYEKVMNEIKENNCVSFKLRKTLAGKVFNLMSAYDAAISNFLLEGEEEYPEYLSVSYKKIQDLRYGENPHQGAAYYSSTEFDGAMNSFEILNGKALSYNNIKDLDIAWKVACEFEETACCALKHNTPCGVAVGENSKEVYLKAYDADPVSIFGGIVAINRKIDKATAEEMVKIFLEVVAAPDFDEDALEVLRTKKNLRVIKCKNTPQAKNYMVTVDGGILVQGEDNKLANEYKVVTEKEPTEMELRDMIFGMKVVKYVKSNAIVVVKDGVATGIGGGQVNRIWATKEALERGKGGAVLASDAFFPFRDCVDEAAKNGIKAIIQPGGSIRDEESIEACNEHGISMVFTGVRHFKH.

One can recognise an MGS-like domain in the interval 1–144; that stretch reads MKKRALISVF…KNFKDVVVLS (144 aa).

Belongs to the PurH family.

It carries out the reaction (6R)-10-formyltetrahydrofolate + 5-amino-1-(5-phospho-beta-D-ribosyl)imidazole-4-carboxamide = 5-formamido-1-(5-phospho-D-ribosyl)imidazole-4-carboxamide + (6S)-5,6,7,8-tetrahydrofolate. The enzyme catalyses IMP + H2O = 5-formamido-1-(5-phospho-D-ribosyl)imidazole-4-carboxamide. It participates in purine metabolism; IMP biosynthesis via de novo pathway; 5-formamido-1-(5-phospho-D-ribosyl)imidazole-4-carboxamide from 5-amino-1-(5-phospho-D-ribosyl)imidazole-4-carboxamide (10-formyl THF route): step 1/1. Its pathway is purine metabolism; IMP biosynthesis via de novo pathway; IMP from 5-formamido-1-(5-phospho-D-ribosyl)imidazole-4-carboxamide: step 1/1. The chain is Bifunctional purine biosynthesis protein PurH from Clostridium perfringens (strain 13 / Type A).